Consider the following 427-residue polypeptide: Phosphatidate cytidylyltransferase, mitochondrial (427 aa).

Residues 94 to 106 (YNRNGDGSTSTEN) are compositionally biased toward polar residues. A disordered region spans residues 94–113 (YNRNGDGSTSTENPSKKEEQ).

It belongs to the TAM41 family. Mg(2+) serves as cofactor.

It localises to the mitochondrion inner membrane. The enzyme catalyses a 1,2-diacyl-sn-glycero-3-phosphate + CTP + H(+) = a CDP-1,2-diacyl-sn-glycerol + diphosphate. The protein operates within phospholipid metabolism; CDP-diacylglycerol biosynthesis; CDP-diacylglycerol from sn-glycerol 3-phosphate: step 3/3. Catalyzes the formation of CDP-diacylglycerol (CDP-DAG) from phosphatidic acid (PA) in the mitochondrial inner membrane. Required for the biosynthesis of the dimeric phospholipid cardiolipin, which stabilizes supercomplexes of the mitochondrial respiratory chain in the mitochondrial inner membrane. The polypeptide is Phosphatidate cytidylyltransferase, mitochondrial (Dictyostelium discoideum (Social amoeba)).